We begin with the raw amino-acid sequence, 280 residues long: tRNA pseudouridine synthase A (280 aa).

The Nucleophile role is filled by Asp55. Residue Tyr110 coordinates substrate.

The protein belongs to the tRNA pseudouridine synthase TruA family.

It carries out the reaction uridine(38/39/40) in tRNA = pseudouridine(38/39/40) in tRNA. In terms of biological role, formation of pseudouridine at positions 38, 39 and 40 in the anticodon stem and loop of transfer RNAs. This is tRNA pseudouridine synthase A from Methanosphaerula palustris (strain ATCC BAA-1556 / DSM 19958 / E1-9c).